The chain runs to 115 residues: Tyrosine-protein phosphatase 18 (115 aa).

Residues 1 to 115 form the Tyrosine-protein phosphatase domain; it reads WLMIVEQKCR…ETGSDAPMVV (115 aa). Aspartate 83 contacts substrate.

This sequence belongs to the protein-tyrosine phosphatase family.

The enzyme catalyses O-phospho-L-tyrosyl-[protein] + H2O = L-tyrosyl-[protein] + phosphate. In Styela plicata (Wrinkled sea squirt), this protein is Tyrosine-protein phosphatase 18 (STY-18).